The following is a 304-amino-acid chain: N-acetyl-D-glucosamine kinase (304 aa).

Residues 4–11 (GLDIGGTK) and 133–140 (GFGGGFVL) each bind ATP. Residues His157, Cys178, Cys180, and Cys185 each coordinate Zn(2+).

The protein belongs to the ROK (NagC/XylR) family. NagK subfamily.

It carries out the reaction N-acetyl-D-glucosamine + ATP = N-acetyl-D-glucosamine 6-phosphate + ADP + H(+). It functions in the pathway cell wall biogenesis; peptidoglycan recycling. Catalyzes the phosphorylation of N-acetyl-D-glucosamine (GlcNAc) derived from cell-wall degradation, yielding GlcNAc-6-P. This is N-acetyl-D-glucosamine kinase from Haemophilus influenzae (strain 86-028NP).